The following is a 304-amino-acid chain: Glutaminase (304 aa).

Substrate-binding residues include Ser63, Asn113, Glu157, Asn164, Tyr188, Tyr240, and Val258.

Belongs to the glutaminase family. As to quaternary structure, homotetramer.

The enzyme catalyses L-glutamine + H2O = L-glutamate + NH4(+). The protein is Glutaminase of Ralstonia nicotianae (strain ATCC BAA-1114 / GMI1000) (Ralstonia solanacearum).